A 430-amino-acid chain; its full sequence is Protein IQ-DOMAIN 3 (430 aa).

The tract at residues 1–36 (MGKSWFSAVKKALSPEPKQKKEQKPHKSKKWFGKSK) is disordered. The Nuclear localization signal 1 signature appears at 9-16 (VKKALSPE). Positions 23-35 (QKPHKSKKWFGKS) are enriched in basic residues. One can recognise an IQ domain in the interval 107 to 135 (EEIAAIKIQTAFRGYMARRALRALRGLVR). Residues 170-224 (RLRLSEDKQALTRQLQQKHNKDFDKTGENWNDSTLSREKVEANMLNKQVATMRRE) are a coiled coil. Residues 213 to 231 (MLNKQVATMRREKALAYAF) form a calmodulin-binding region. 2 disordered regions span residues 271–368 (ENHS…SQSV) and 385–430 (SNLS…TNLA). Over residues 286 to 295 (ARSVASRAMS) the composition is skewed to low complexity. Polar residues predominate over residues 326–340 (SEDSNSIVSFQSEQP). The short motif at 396–403 (AKKRLSFS) is the Nuclear localization signal 2 element.

It belongs to the IQD family. As to quaternary structure, binds to multiple calmodulin (CaM) in the presence of Ca(2+) and CaM-like proteins.

Its subcellular location is the nucleus. It is found in the nucleolus. It localises to the cytoplasm. The protein resides in the cytoskeleton. May be involved in cooperative interactions with calmodulins or calmodulin-like proteins. Recruits calmodulin proteins to microtubules, thus being a potential scaffold in cellular signaling and trafficking. May associate with nucleic acids and regulate gene expression at the transcriptional or post-transcriptional level. This is Protein IQ-DOMAIN 3 from Arabidopsis thaliana (Mouse-ear cress).